The primary structure comprises 621 residues: MIFIPVMKEFFDIVVIGGGHAGCEAAAVAARMGAKTALVTMDSEQIGAMSCNPAIGGLGKGHLVREIDAWDGLMPHAADYAAIHYRMLNRSKGSAVQGPRIQADRNRYKKAIQTALKEQAHLTIIEGMAESFQMDKGKVKAVLLADGRPLKTESVVLTTGTFLDAWLFCGEKKWRGGRIGEQPSIGLAEQLKALDLPLGRLKTGTPARLDGRTIDWARLQRQPSDEDAWTMASYGAGRVAPQIACSLTRSNQKTHDIIRAGLDRSPLFSGAIEGRGPRYCPSIEDKIMKFGDRDGHQIFLEPEGLDTPLIYPNGISTSLPEDVQQAFINSIEGLENTKIVQFGYAVEYEFIDPRSLTHQLELKALKSVFCAGQINGTTGYEEAAAQGLVAGISAACAVAGKAPPVFDRRNSYIGVMIDDLVLQGVTEPYRMLTARAEYRLGLRADNAVTRLSGQAKAFGALGAEMTDFVTKRLAEREKCQKLLEKAASSRDMQAVGANVTEGASHSLFEWLRFPAVTRQHLEALIPELTEFSDAVVSEIIDDGRYAPYLERQDAELARLAGHDNMPLPAELDYATIAGLSNEMVEKFSAARPPDMASASRVRGVTPAALAAILIHAKKVTL.

17-22 (GGGHAG) is a binding site for FAD. 276-290 (GPRYCPSIEDKIMKF) contributes to the NAD(+) binding site.

The protein belongs to the MnmG family. Homodimer. Heterotetramer of two MnmE and two MnmG subunits. It depends on FAD as a cofactor.

It is found in the cytoplasm. NAD-binding protein involved in the addition of a carboxymethylaminomethyl (cmnm) group at the wobble position (U34) of certain tRNAs, forming tRNA-cmnm(5)s(2)U34. The chain is tRNA uridine 5-carboxymethylaminomethyl modification enzyme MnmG from Zymomonas mobilis subsp. mobilis (strain ATCC 31821 / ZM4 / CP4).